We begin with the raw amino-acid sequence, 423 residues long: Methylenetetrahydrofolate--tRNA-(uracil-5-)-methyltransferase TrmFO 2 (423 aa).

8 to 13 (GAGLSG) contacts FAD.

This sequence belongs to the MnmG family. TrmFO subfamily. FAD is required as a cofactor.

It is found in the cytoplasm. The catalysed reaction is uridine(54) in tRNA + (6R)-5,10-methylene-5,6,7,8-tetrahydrofolate + NADH + H(+) = 5-methyluridine(54) in tRNA + (6S)-5,6,7,8-tetrahydrofolate + NAD(+). It catalyses the reaction uridine(54) in tRNA + (6R)-5,10-methylene-5,6,7,8-tetrahydrofolate + NADPH + H(+) = 5-methyluridine(54) in tRNA + (6S)-5,6,7,8-tetrahydrofolate + NADP(+). Functionally, catalyzes the folate-dependent formation of 5-methyl-uridine at position 54 (M-5-U54) in all tRNAs. The sequence is that of Methylenetetrahydrofolate--tRNA-(uracil-5-)-methyltransferase TrmFO 2 from Mycoplasma capricolum subsp. capricolum (strain California kid / ATCC 27343 / NCTC 10154).